The following is a 311-amino-acid chain: Olfactory receptor 5L2 (311 aa).

Residues 1-25 are Extracellular-facing; that stretch reads MGKENCTTVAEFILLGLSDVPELRV. N-linked (GlcNAc...) asparagine glycosylation is present at Asn5. A helical membrane pass occupies residues 26-46; that stretch reads CLFLLFLLIYGVTLLANLGMT. Residues 47–54 are Cytoplasmic-facing; sequence ALIQVSSR. The helical transmembrane segment at 55–75 threads the bilayer; sequence LHTPVYFFLSHLSFVDFCYSS. The Extracellular portion of the chain corresponds to 76–99; that stretch reads IIVPKMLANIFNKDKAISFLGCMV. Residues Cys97 and Cys189 are joined by a disulfide bond. The helical transmembrane segment at 100 to 120 threads the bilayer; the sequence is QFYLFCTCGVTEVFLLAVMAY. Residues 121 to 139 lie on the Cytoplasmic side of the membrane; that stretch reads DRFVAICNPLLYMVTMSQK. The helical transmembrane segment at 140–160 threads the bilayer; sequence LRVELTSCCYFCGTVCSLIHS. Residues 161–196 lie on the Extracellular side of the membrane; sequence SLALRILFYRSNVINHFFCDLPPLLSLACSDVTVNE. N-linked (GlcNAc...) asparagine glycosylation is present at Asn195. The chain crosses the membrane as a helical span at residues 197–217; sequence TLLFLVATLNESVTIMIILTS. The Cytoplasmic segment spans residues 218-237; it reads YLLILTTILKIHSAESRHKA. The chain crosses the membrane as a helical span at residues 238–258; the sequence is FSTCASHLTAITVSHGTILYI. Residues 259–271 are Extracellular-facing; sequence YCRPSSGNSGDVD. The chain crosses the membrane as a helical span at residues 272–292; it reads KVATVFYTVVIPMLNPLIYSL. At 293–311 the chain is on the cytoplasmic side; it reads RNKDVNKALRKVMGSKIHS.

Belongs to the G-protein coupled receptor 1 family.

It is found in the cell membrane. Its function is as follows. Odorant receptor. In Homo sapiens (Human), this protein is Olfactory receptor 5L2 (OR5L2).